A 197-amino-acid chain; its full sequence is GTP cyclohydrolase-2 (197 aa).

Residue 50 to 54 (RIHSE) participates in GTP binding. The Zn(2+) site is built by cysteine 55, cysteine 66, and cysteine 68. Residues glutamine 71, 93-95 (EGR), and threonine 115 contribute to the GTP site. The active-site Proton acceptor is the aspartate 127. Arginine 129 serves as the catalytic Nucleophile. Positions 150 and 155 each coordinate GTP.

Belongs to the GTP cyclohydrolase II family. Zn(2+) is required as a cofactor.

The catalysed reaction is GTP + 4 H2O = 2,5-diamino-6-hydroxy-4-(5-phosphoribosylamino)-pyrimidine + formate + 2 phosphate + 3 H(+). Its pathway is cofactor biosynthesis; riboflavin biosynthesis; 5-amino-6-(D-ribitylamino)uracil from GTP: step 1/4. Functionally, catalyzes the conversion of GTP to 2,5-diamino-6-ribosylamino-4(3H)-pyrimidinone 5'-phosphate (DARP), formate and pyrophosphate. This chain is GTP cyclohydrolase-2, found in Neisseria meningitidis serogroup A / serotype 4A (strain DSM 15465 / Z2491).